The chain runs to 165 residues: Nascent polypeptide-associated complex subunit beta (165 aa).

Positions 33–97 (TTDDKRLQST…PQTKKLQDIL (65 aa)) constitute an NAC-A/B domain. The segment at 120 to 165 (QKQAPGAGDVPATIQEEDDDDDVPDLVVGETFETPATEEAPKAAAS) is disordered. Acidic residues predominate over residues 134–143 (QEEDDDDDVP). The span at 144–165 (DLVVGETFETPATEEAPKAAAS) shows a compositional bias: low complexity.

This sequence belongs to the NAC-beta family. Part of the nascent polypeptide-associated complex (NAC).

The polypeptide is Nascent polypeptide-associated complex subunit beta (Arabidopsis thaliana (Mouse-ear cress)).